A 453-amino-acid chain; its full sequence is MTAAILADALTQKVHQTEIDKELQALKEQAMVSGTEDSILVNKRQGAADLLGSLRLPHKRDEEWQFTDLSELKAIDFVAAGKVSLDVAAAENFYLPEAHQSRLVFINGFFTPELSNTNDLPSAITCQSWTNLAAHQREQLANYLGQKTDGNEVFSNLNTAGMTDSAVVWIPANTELKSPIHLLFLTVVDPTPIMVQPRLLVVVENNAQVTIAESYGAISTNCTDRPQQQPYFNNIVSEIYLGENAQVTHIRNQRDSGDSFHIATTAIAQGKQSRYRLIDVNLGAKLSRHNLQMTQQEEATKTEFLALTILAGRQVSDTHSTIALNHPHGATNQLHKCIVDEYAQAVFSGKVLVPQAAQLTNAQQLNRNLVLSSKARINTKPELQITADNVKCSHGATISQLEADEVFYLRSRGLNDYDARHLLIDAFAGEILDQIPLASLQGRLRQCVSCRTI.

This sequence belongs to the iron-sulfur cluster assembly SufBD family.

The polypeptide is Iron-sulfur cluster assembly SufBD family protein slr0076 (Synechocystis sp. (strain ATCC 27184 / PCC 6803 / Kazusa)).